An 854-amino-acid chain; its full sequence is Putative COX1/OXI3 intron 2 protein (854 aa).

The Reverse transcriptase domain maps to 329 to 613 (LSKDINTNMF…EGVSFLGYDV (285 aa)).

The protein localises to the mitochondrion. This chain is Putative COX1/OXI3 intron 2 protein (AI2), found in Saccharomyces cerevisiae (strain ATCC 204508 / S288c) (Baker's yeast).